Here is a 66-residue protein sequence, read N- to C-terminus: Large ribosomal subunit protein bL35 (66 aa).

The protein belongs to the bacterial ribosomal protein bL35 family.

This chain is Large ribosomal subunit protein bL35, found in Afipia carboxidovorans (strain ATCC 49405 / DSM 1227 / KCTC 32145 / OM5) (Oligotropha carboxidovorans).